The chain runs to 367 residues: Uroporphyrinogen decarboxylase (367 aa).

Residue methionine 1 is modified to N-acetylmethionine. Coproporphyrinogen I contacts are provided by arginine 37, alanine 39, arginine 41, arginine 50, aspartate 86, tyrosine 164, serine 219, and histidine 339. Coproporphyrinogen III-binding residues include arginine 37, alanine 39, and arginine 41. Residues aspartate 86, tyrosine 164, serine 219, and histidine 339 each contribute to the coproporphyrinogen III site.

It belongs to the uroporphyrinogen decarboxylase family. As to quaternary structure, homodimer.

It localises to the cytoplasm. The protein resides in the cytosol. It carries out the reaction uroporphyrinogen III + 4 H(+) = coproporphyrinogen III + 4 CO2. It catalyses the reaction uroporphyrinogen I + 4 H(+) = coproporphyrinogen I + 4 CO2. It participates in porphyrin-containing compound metabolism; protoporphyrin-IX biosynthesis; coproporphyrinogen-III from 5-aminolevulinate: step 4/4. In terms of biological role, catalyzes the sequential decarboxylation of the four acetate side chains of uroporphyrinogen to form coproporphyrinogen and participates in the fifth step in the heme biosynthetic pathway. Isomer I or isomer III of uroporphyrinogen may serve as substrate, but only coproporphyrinogen III can ultimately be converted to heme. In vitro also decarboxylates pentacarboxylate porphyrinogen I. The chain is Uroporphyrinogen decarboxylase from Pongo abelii (Sumatran orangutan).